The following is a 334-amino-acid chain: Putative transport protein MTH_1211 (334 aa).

8 consecutive transmembrane segments (helical) span residues 24 to 44 (AIVV…AYIV), 60 to 80 (VSII…LVFT), 84 to 104 (IINS…PGAG), 131 to 151 (YVVA…VFLS), 189 to 209 (VLLS…LMAA), 220 to 240 (AILL…GPWA), 255 to 275 (ILRG…DIYL), and 289 to 309 (MIFL…GFIV).

Belongs to the autoinducer-2 exporter (AI-2E) (TC 2.A.86) family.

Its subcellular location is the cell membrane. The polypeptide is Putative transport protein MTH_1211 (Methanothermobacter thermautotrophicus (strain ATCC 29096 / DSM 1053 / JCM 10044 / NBRC 100330 / Delta H) (Methanobacterium thermoautotrophicum)).